The primary structure comprises 110 residues: Large ribosomal subunit protein uL22 (110 aa).

The protein belongs to the universal ribosomal protein uL22 family. In terms of assembly, part of the 50S ribosomal subunit.

Functionally, this protein binds specifically to 23S rRNA; its binding is stimulated by other ribosomal proteins, e.g. L4, L17, and L20. It is important during the early stages of 50S assembly. It makes multiple contacts with different domains of the 23S rRNA in the assembled 50S subunit and ribosome. Its function is as follows. The globular domain of the protein is located near the polypeptide exit tunnel on the outside of the subunit, while an extended beta-hairpin is found that lines the wall of the exit tunnel in the center of the 70S ribosome. This chain is Large ribosomal subunit protein uL22, found in Yersinia pseudotuberculosis serotype O:1b (strain IP 31758).